The chain runs to 103 residues: Small ribosomal subunit protein uS10 (103 aa).

The protein belongs to the universal ribosomal protein uS10 family. Part of the 30S ribosomal subunit.

Its function is as follows. Involved in the binding of tRNA to the ribosomes. The polypeptide is Small ribosomal subunit protein uS10 (Cutibacterium acnes (strain DSM 16379 / KPA171202) (Propionibacterium acnes)).